The primary structure comprises 134 residues: ATP synthase epsilon chain (134 aa).

Belongs to the ATPase epsilon chain family. F-type ATPases have 2 components, CF(1) - the catalytic core - and CF(0) - the membrane proton channel. CF(1) has five subunits: alpha(3), beta(3), gamma(1), delta(1), epsilon(1). CF(0) has three main subunits: a, b and c.

Its subcellular location is the cell membrane. Its function is as follows. Produces ATP from ADP in the presence of a proton gradient across the membrane. This chain is ATP synthase epsilon chain, found in Listeria welshimeri serovar 6b (strain ATCC 35897 / DSM 20650 / CCUG 15529 / CIP 8149 / NCTC 11857 / SLCC 5334 / V8).